The following is a 233-amino-acid chain: AA9 family lytic polysaccharide monooxygenase A (233 aa).

An N-terminal signal peptide occupies residues 1–17; the sequence is MKLTTSVALLAAAGAQA. Positions 18 and 90 each coordinate Cu(2+). Disulfide bonds link cysteine 59–cysteine 180 and cysteine 150–cysteine 233. Residue asparagine 132 is glycosylated (N-linked (GlcNAc...) asparagine). Residues histidine 166 and glutamine 175 each contribute to the O2 site. Tyrosine 177 contributes to the Cu(2+) binding site.

The protein belongs to the polysaccharide monooxygenase AA9 family. It depends on Cu(2+) as a cofactor.

Its subcellular location is the secreted. The enzyme catalyses [(1-&gt;4)-beta-D-glucosyl]n+m + reduced acceptor + O2 = 4-dehydro-beta-D-glucosyl-[(1-&gt;4)-beta-D-glucosyl]n-1 + [(1-&gt;4)-beta-D-glucosyl]m + acceptor + H2O.. Its function is as follows. Lytic polysaccharide monooxygenase (LPMO) that depolymerizes crystalline and amorphous polysaccharides via the oxidation of scissile alpha- or beta-(1-4)-glycosidic bonds, yielding C1 and C4 oxidation products. Catalysis by LPMOs requires the reduction of the active-site copper from Cu(II) to Cu(I) by a reducing agent and H(2)O(2) or O(2) as a cosubstrate. Shows endoglucanase activity on tamarind xyloglucan, as well as on beechwood xylan when combined with phosphoric acid swollen cellulose (PASC). Shows no activity on wheat arabinoxylan, konjac glucomannan, acetylated spruce galactoglucomannan, or cellopentaose. The polypeptide is AA9 family lytic polysaccharide monooxygenase A (Thermothielavioides terrestris (strain ATCC 38088 / NRRL 8126) (Thielavia terrestris)).